Reading from the N-terminus, the 67-residue chain is Kappa-scoloptoxin(04)-Ssd1b (67 aa).

An N-terminal signal peptide occupies residues 1 to 24 (MKKTCVVSVFLVLLLLKFHDLSMG). The propeptide occupies 25 to 36 (EEISPLKKVARR). 2 cysteine pairs are disulfide-bonded: C44–C55 and C49–C62.

Expressed by the venom gland.

It localises to the secreted. This chain is Kappa-scoloptoxin(04)-Ssd1b, found in Scolopendra dehaani (Thai centipede).